The following is a 122-amino-acid chain: Large ribosomal subunit protein bL12 (122 aa).

Belongs to the bacterial ribosomal protein bL12 family. As to quaternary structure, homodimer. Part of the ribosomal stalk of the 50S ribosomal subunit. Forms a multimeric L10(L12)X complex, where L10 forms an elongated spine to which 2 to 4 L12 dimers bind in a sequential fashion. Binds GTP-bound translation factors.

In terms of biological role, forms part of the ribosomal stalk which helps the ribosome interact with GTP-bound translation factors. Is thus essential for accurate translation. This is Large ribosomal subunit protein bL12 from Bdellovibrio bacteriovorus (strain ATCC 15356 / DSM 50701 / NCIMB 9529 / HD100).